Here is a 144-residue protein sequence, read N- to C-terminus: Putative pre-16S rRNA nuclease (144 aa).

The protein belongs to the YqgF nuclease family.

The protein resides in the cytoplasm. Could be a nuclease involved in processing of the 5'-end of pre-16S rRNA. This is Putative pre-16S rRNA nuclease from Pseudomonas paraeruginosa (strain DSM 24068 / PA7) (Pseudomonas aeruginosa (strain PA7)).